Consider the following 510-residue polypeptide: Cytochrome P450 90D2 (510 aa).

Residues 6–26 (MVGSGGVYSWPAALLVAAIVV) traverse the membrane as a helical segment. Residue Cys444 participates in heme binding.

Belongs to the cytochrome P450 family. It depends on heme as a cofactor.

The protein localises to the membrane. It carries out the reaction 3-epi-6-deoxocathasterone + reduced [NADPH--hemoprotein reductase] + O2 = 6-deoxotyphasterol + oxidized [NADPH--hemoprotein reductase] + H2O + H(+). The enzyme catalyses (22S,24R)-22-hydroxy-5alpha-ergostan-3-one + reduced [NADPH--hemoprotein reductase] + O2 = 3-dehydro-6-deoxoteasterone + oxidized [NADPH--hemoprotein reductase] + H2O + H(+). The catalysed reaction is 6-deoxycathasterone + reduced [NADPH--hemoprotein reductase] + O2 = 6-deoxoteasterone + oxidized [NADPH--hemoprotein reductase] + H2O + H(+). It participates in plant hormone biosynthesis; brassinosteroid biosynthesis. Involved in reduction steps of the biosynthesis of plant campesterol-derivative steroids, ending to castasterone (CS) but missing brassinolide (BL). Catalyzes the conversion of (22S,24R)-22-hydroxy-5alpha-ergostan-3-one (22-hydroxy-campesta-3-one, 22-OH-3-one) to 3-dehydro-6-deoxoteasterone (6-deoxo3DT, 6-deoxo-3-DHT), 3-epi-6-deoxocathasterone (3-epi-6-deoxoCT) to 6-deoxotyphasterol (6-deoxoTY) and of 6-deoxocathasterone (6-deoxoCT) to 6-deoxoteasterone (6-deoxoTE). The chain is Cytochrome P450 90D2 from Brachypodium distachyon (Purple false brome).